The chain runs to 85 residues: MGSFSIWHWLIVLVIIMMVFGTKKLRNIGSDLGSAVKGFKDGMREGQEDKPAGSQQPQQTAGQPPRELHDATTIDVEARDKSKQG.

Residues 1 to 21 traverse the membrane as a helical segment; the sequence is MGSFSIWHWLIVLVIIMMVFG. A compositionally biased stretch (basic and acidic residues) spans 39-51; the sequence is FKDGMREGQEDKP. The disordered stretch occupies residues 39-85; that stretch reads FKDGMREGQEDKPAGSQQPQQTAGQPPRELHDATTIDVEARDKSKQG. Polar residues predominate over residues 53-62; sequence GSQQPQQTAG. The span at 66-85 shows a compositional bias: basic and acidic residues; it reads RELHDATTIDVEARDKSKQG.

The protein belongs to the TatA/E family. In terms of assembly, the Tat system comprises two distinct complexes: a TatABC complex, containing multiple copies of TatA, TatB and TatC subunits, and a separate TatA complex, containing only TatA subunits. Substrates initially bind to the TatABC complex, which probably triggers association of the separate TatA complex to form the active translocon.

Its subcellular location is the cell inner membrane. Part of the twin-arginine translocation (Tat) system that transports large folded proteins containing a characteristic twin-arginine motif in their signal peptide across membranes. TatA could form the protein-conducting channel of the Tat system. In Ralstonia pickettii (strain 12J), this protein is Sec-independent protein translocase protein TatA.